Here is an 86-residue protein sequence, read N- to C-terminus: Kappa-theraphotoxin-Cg1a 1 (86 aa).

Residues 1–21 form the signal peptide; sequence MKVSVLITLAVLGVMFVWASA. Residues 22-50 constitute a propeptide that is removed on maturation; that stretch reads AELEERGSDQRDSPAWLKSMERIFQSGER. 3 disulfides stabilise this stretch: Cys-52–Cys-66, Cys-59–Cys-71, and Cys-65–Cys-78. The interval 55–56 is involved in active face; sequence MF. Phe-84 carries the post-translational modification Phenylalanine amide.

Belongs to the neurotoxin 10 (Hwtx-1) family. 28 (Jztx-11) subfamily. In terms of tissue distribution, expressed by the venom gland.

The protein localises to the secreted. In terms of biological role, this toxin acts as a voltage-dependent gating-modifier. It inhibits the sodium conductance (IC(50)=124 nM) and slows the fast inactivation (EC(50)=1180 nM) of Nav1.5/SCN5A. It significantly shifts the activation to more depolarized voltages and decreases the deactivation of Nav1.5 currents upon extreme depolarization, but only slightly affects voltage-dependence of steady-state inactivation. In addition, this toxin causes an approximately five-fold decrease in the rate of recovery from inactivation and an approximately 1.9-fold reduction in the closed-state inactivation rate. This toxin integrates the functions of site 3 toxins (alpha-scorpion toxins) with site 4 toxins (beta-scorpion and spider toxins) by targeting multiple sites on Nav1.5. Also shows inhibition of voltage-gated potassium channels (5 uM completely inhibits Kv2.1/KCNB1, whereas 5 uM moderately inhibits Kv4.2/KCND2 Kv4.1/KCND1 channels). The polypeptide is Kappa-theraphotoxin-Cg1a 1 (Chilobrachys guangxiensis (Chinese earth tiger tarantula)).